The following is a 451-amino-acid chain: NADP-specific glutamate dehydrogenase (451 aa).

Residue Lys-113 is part of the active site. Phosphoserine is present on Ser-252.

This sequence belongs to the Glu/Leu/Phe/Val dehydrogenases family. As to quaternary structure, homohexamer.

The enzyme catalyses L-glutamate + NADP(+) + H2O = 2-oxoglutarate + NH4(+) + NADPH + H(+). In Schizosaccharomyces pombe (strain 972 / ATCC 24843) (Fission yeast), this protein is NADP-specific glutamate dehydrogenase (gdh1).